Consider the following 266-residue polypeptide: Small ribosomal subunit protein uS3m (266 aa).

It belongs to the universal ribosomal protein uS3 family.

The protein resides in the mitochondrion. The polypeptide is Small ribosomal subunit protein uS3m (MRPS3) (Mycosarcoma maydis (Corn smut fungus)).